We begin with the raw amino-acid sequence, 105 residues long: uncharacterized protein (105 aa).

2 helical membrane-spanning segments follow: residues 7–26 (VLSV…WLSL) and 30–52 (VDMT…LISI).

It localises to the cell membrane. This is an uncharacterized protein from Archaeoglobus fulgidus (strain ATCC 49558 / DSM 4304 / JCM 9628 / NBRC 100126 / VC-16).